The primary structure comprises 282 residues: Bifunctional protein FolD (282 aa).

Residues 165–167 (GAS) and Ile231 contribute to the NADP(+) site.

This sequence belongs to the tetrahydrofolate dehydrogenase/cyclohydrolase family. As to quaternary structure, homodimer.

It catalyses the reaction (6R)-5,10-methylene-5,6,7,8-tetrahydrofolate + NADP(+) = (6R)-5,10-methenyltetrahydrofolate + NADPH. It carries out the reaction (6R)-5,10-methenyltetrahydrofolate + H2O = (6R)-10-formyltetrahydrofolate + H(+). It participates in one-carbon metabolism; tetrahydrofolate interconversion. In terms of biological role, catalyzes the oxidation of 5,10-methylenetetrahydrofolate to 5,10-methenyltetrahydrofolate and then the hydrolysis of 5,10-methenyltetrahydrofolate to 10-formyltetrahydrofolate. This chain is Bifunctional protein FolD, found in Francisella tularensis subsp. mediasiatica (strain FSC147).